The following is a 670-amino-acid chain: Penicillin-binding protein activator LpoA (670 aa).

Residues 1–26 (MLPSKVVHRKAVRTVPLLLAALIFAG) form the signal peptide. C27 carries the N-palmitoyl cysteine lipid modification. C27 carries the S-diacylglycerol cysteine lipid modification.

Belongs to the LpoA family. In terms of assembly, interacts with PBP1a.

It is found in the cell outer membrane. In terms of biological role, regulator of peptidoglycan synthesis that is essential for the function of penicillin-binding protein 1A (PBP1a). The polypeptide is Penicillin-binding protein activator LpoA (Erwinia tasmaniensis (strain DSM 17950 / CFBP 7177 / CIP 109463 / NCPPB 4357 / Et1/99)).